A 540-amino-acid polypeptide reads, in one-letter code: MKLLAVRRLFRIQRVVIRYRLDDLLFDQPLLPWWLASLRLLMPWRWLPRKPTELSRGARLRLALQDLGPIFIKFGQLLSTRRDLLPPDIADELMLLQDRVPPFDPKKAVALIEEQLGAKVGEVFSRFDVEPLASASVAQVHAARLKTGEEVVVKVVRPGLKPVIAQDLAWLFLIAKAAERASADARRLHPVEIVGDYEKTIYDELDLLREAANASQLRRNFEDSELMYVPQVYWDLCRPKVLVMERIYGVPVTDMATLADQRTDMKLLAERGVEVFFTQVFRDSFFHADMHPGNIFVSTVKPWSPQYIAIDCGIVGSLTAEDQDYLARNLFAFFKRDYRRVAQLHIDSGWVPANTKVNEFEAAIRTVCEPIFEKPLKDISFGQVLMRLFQTARRFNMEVQPQLVLLQKTLLNIEGLGRQLYPDLDLWSTAKPYLERWMRDRYSPKAVFGNLHSQVEQLPHLAGMTRDLLERLSQPHLHDPQLPERRRQGDRWALRLLGAGLLGGGAVLAAGAAETASLAAPAAWPAWLMLAAGLYLIVRQ.

Residues Leu-24–Trp-44 form a helical membrane-spanning segment. In terms of domain architecture, Protein kinase spans Arg-126–Leu-494. ATP-binding positions include Leu-132–Val-140 and Lys-154. Catalysis depends on Asp-289, which acts as the Proton acceptor. The next 2 helical transmembrane spans lie at Leu-496–Ala-516 and Leu-518–Val-538.

Belongs to the ABC1 family. UbiB subfamily.

Its subcellular location is the cell inner membrane. It functions in the pathway cofactor biosynthesis; ubiquinone biosynthesis [regulation]. In terms of biological role, is probably a protein kinase regulator of UbiI activity which is involved in aerobic coenzyme Q (ubiquinone) biosynthesis. The protein is Probable protein kinase UbiB of Pseudomonas putida (strain ATCC 700007 / DSM 6899 / JCM 31910 / BCRC 17059 / LMG 24140 / F1).